Here is a 160-residue protein sequence, read N- to C-terminus: Small ribosomal subunit protein bS16 (160 aa).

A disordered region spans residues 115 to 139 (GGPTTEATRPKKKVSAKKAAKAVES). Basic residues predominate over residues 124-134 (PKKKVSAKKAA).

This sequence belongs to the bacterial ribosomal protein bS16 family.

The polypeptide is Small ribosomal subunit protein bS16 (Mycobacterium leprae (strain Br4923)).